A 486-amino-acid chain; its full sequence is UDP-N-acetylmuramate--L-alanine ligase (486 aa).

Position 123–129 (123–129 (GTHGKTT)) interacts with ATP.

Belongs to the MurCDEF family.

Its subcellular location is the cytoplasm. The catalysed reaction is UDP-N-acetyl-alpha-D-muramate + L-alanine + ATP = UDP-N-acetyl-alpha-D-muramoyl-L-alanine + ADP + phosphate + H(+). It participates in cell wall biogenesis; peptidoglycan biosynthesis. Cell wall formation. The sequence is that of UDP-N-acetylmuramate--L-alanine ligase from Pseudomonas syringae pv. syringae (strain B728a).